The primary structure comprises 500 residues: Lysine--tRNA ligase (500 aa).

Mg(2+) is bound by residues Glu410 and Glu417.

Belongs to the class-II aminoacyl-tRNA synthetase family. In terms of assembly, homodimer. Requires Mg(2+) as cofactor.

It localises to the cytoplasm. It catalyses the reaction tRNA(Lys) + L-lysine + ATP = L-lysyl-tRNA(Lys) + AMP + diphosphate. This chain is Lysine--tRNA ligase, found in Shewanella amazonensis (strain ATCC BAA-1098 / SB2B).